Consider the following 367-residue polypeptide: Cyclic AMP-responsive element-binding protein 3-like protein 4 (367 aa).

Residues 1-52 are required for transcriptional activation; that stretch reads MELGCPELLEPPEDIFSTGSFLELGFNGPPSKVPGLQKSESDDFLNLFIDPN. Residues 1 to 267 lie on the Cytoplasmic side of the membrane; it reads MELGCPELLE…QTSSRAAQTS (267 aa). The segment at 58–81 is disordered; it reads ETSPGSDSGVSEDPGSPAPQAPSS. The bZIP domain maps to 189–252; it reads ILKKIRRKIR…ISLVAQVHQL (64 aa). The segment at 191–230 is basic motif; that stretch reads KKIRRKIRNKQSAQDSRRRKKEYIDGLESRVAACSEQNQK. The interval 231 to 252 is leucine-zipper; the sequence is LQRKVQELERQNISLVAQVHQL. Residues 268–288 form a helical; Signal-anchor for type II membrane protein membrane-spanning segment; it reads TCVLILLFSLALIILPSFSPF. At 289–367 the chain is on the lumenal side; that stretch reads QSQPEARSEG…IRGMVHADEM (79 aa). Asn-338 carries an N-linked (GlcNAc...) asparagine glycan.

This sequence belongs to the bZIP family. ATF subfamily. Binds DNA as a dimer. Forms a heterodimer with CREM isoform Delta. Controlled by regulated intramembrane proteolysis (RIP). Following ER stress a fragment containing the cytoplasmic transcription factor domain is released by proteolysis. The cleavage seems to be performed sequentially by site-1 and site-2 proteases (PS1 and PS2). PS1 cleavage may be suppressed by a determinant in the C-terminal region.

It localises to the endoplasmic reticulum membrane. It is found in the nucleus. Transcriptional activator that may play a role in the unfolded protein response. Binds to the UPR element (UPRE) but not to CRE element. Preferentially binds DNA with to the consensus sequence 5'-T[GT]ACGT[GA][GT]-3' and has transcriptional activation activity from UPRE. Binds to NF-kappa-B site and has transcriptional activation activity from NF-kappa-B-containing regulatory elements. Increases the binding of CREM isoform Delta with CRE. The CREM isoform Delta-CREB3L4 heterodimer functions through CRE but not through UPRE and may recruit HIRA to CRE to regulate histone exchange. This chain is Cyclic AMP-responsive element-binding protein 3-like protein 4 (Creb3l4), found in Rattus norvegicus (Rat).